We begin with the raw amino-acid sequence, 300 residues long: RNA polymerase sigma factor RpoH (300 aa).

The segment at 53 to 122 (LVTSHLRLVA…IQEYILRSWS (70 aa)) is sigma-70 factor domain-2. Residues 77 to 80 (EVVS) carry the Interaction with polymerase core subunit RpoC motif. The tract at residues 231–282 (AMGVLNDRERRIFEARRLAEDPVTLEELSSEFDISRERVRQIEVRAFEKVQE) is sigma-70 factor domain-4. The H-T-H motif DNA-binding region spans 255-274 (LEELSSEFDISRERVRQIEV).

The protein belongs to the sigma-70 factor family. RpoH subfamily. In terms of assembly, interacts with the RNA polymerase core enzyme.

It is found in the cytoplasm. Its function is as follows. Sigma factors are initiation factors that promote the attachment of RNA polymerase to specific initiation sites and are then released. This sigma factor is involved in regulation of expression of heat shock genes. In Rhizobium radiobacter (Agrobacterium tumefaciens), this protein is RNA polymerase sigma factor RpoH.